Here is a 98-residue protein sequence, read N- to C-terminus: Small ribosomal subunit protein bS6 (98 aa).

The protein belongs to the bacterial ribosomal protein bS6 family.

Its function is as follows. Binds together with bS18 to 16S ribosomal RNA. In Lactobacillus helveticus (strain DPC 4571), this protein is Small ribosomal subunit protein bS6.